Reading from the N-terminus, the 463-residue chain is tRNA modification GTPase MnmE (463 aa).

Positions 29, 91, and 130 each coordinate (6S)-5-formyl-5,6,7,8-tetrahydrofolate. The 160-residue stretch at 225 to 384 folds into the TrmE-type G domain; it reads GLKVAIVGRP…LETAILEIVQ (160 aa). Asparagine 235 lines the K(+) pocket. GTP is bound by residues 235 to 240, 254 to 260, and 279 to 282; these read NVGKSS, TDLPGTT, and DTAG. Serine 239 lines the Mg(2+) pocket. K(+)-binding residues include threonine 254, leucine 256, and threonine 259. Threonine 260 serves as a coordination point for Mg(2+). Lysine 463 contributes to the (6S)-5-formyl-5,6,7,8-tetrahydrofolate binding site.

Belongs to the TRAFAC class TrmE-Era-EngA-EngB-Septin-like GTPase superfamily. TrmE GTPase family. In terms of assembly, homodimer. Heterotetramer of two MnmE and two MnmG subunits. Requires K(+) as cofactor.

The protein localises to the cytoplasm. In terms of biological role, exhibits a very high intrinsic GTPase hydrolysis rate. Involved in the addition of a carboxymethylaminomethyl (cmnm) group at the wobble position (U34) of certain tRNAs, forming tRNA-cmnm(5)s(2)U34. The sequence is that of tRNA modification GTPase MnmE from Trichormus variabilis (strain ATCC 29413 / PCC 7937) (Anabaena variabilis).